Reading from the N-terminus, the 137-residue chain is Large ribosomal subunit protein uL16 (137 aa).

This sequence belongs to the universal ribosomal protein uL16 family. Part of the 50S ribosomal subunit.

Binds 23S rRNA and is also seen to make contacts with the A and possibly P site tRNAs. The polypeptide is Large ribosomal subunit protein uL16 (Ruegeria pomeroyi (strain ATCC 700808 / DSM 15171 / DSS-3) (Silicibacter pomeroyi)).